The following is a 481-amino-acid chain: MFS transporter eqxG (481 aa).

Residues 1–13 (MATTDPAIAAPDD) are compositionally biased toward low complexity. The disordered stretch occupies residues 1 to 58 (MATTDPAIAAPDDSQLEAGRENIRANVGDALEKPSSSTGTMVDEPTDPNVVDWDGPHD). An N-linked (GlcNAc...) asparagine glycan is attached at asparagine 64. Residues 72–92 (LHLVIVSLFTLAANLAATMFA) traverse the membrane as a helical segment. An N-linked (GlcNAc...) asparagine glycan is attached at asparagine 106. Transmembrane regions (helical) follow at residues 111–131 (AMTV…LAPL), 146–166 (FVYV…MFLV), 169–189 (IICG…VADL), 201–221 (LFTV…TVIF), 276–296 (PIVL…FLLF), 315–335 (GLAY…FSVL), 353–373 (LILM…YGWT), 380–400 (WIVP…VVIP), 403–423 (IYLV…ANLL), and 439–459 (LYVS…CLLF).

The protein belongs to the major facilitator superfamily.

It is found in the cell membrane. Its function is as follows. Efflux pump that might be required for efficient secretion of equisetin or other secondary metabolies produced by the equisetin gene cluster. This Fusarium heterosporum protein is MFS transporter eqxG.